The sequence spans 160 residues: SsrA-binding protein (160 aa).

The protein belongs to the SmpB family.

It localises to the cytoplasm. Functionally, required for rescue of stalled ribosomes mediated by trans-translation. Binds to transfer-messenger RNA (tmRNA), required for stable association of tmRNA with ribosomes. tmRNA and SmpB together mimic tRNA shape, replacing the anticodon stem-loop with SmpB. tmRNA is encoded by the ssrA gene; the 2 termini fold to resemble tRNA(Ala) and it encodes a 'tag peptide', a short internal open reading frame. During trans-translation Ala-aminoacylated tmRNA acts like a tRNA, entering the A-site of stalled ribosomes, displacing the stalled mRNA. The ribosome then switches to translate the ORF on the tmRNA; the nascent peptide is terminated with the 'tag peptide' encoded by the tmRNA and targeted for degradation. The ribosome is freed to recommence translation, which seems to be the essential function of trans-translation. The polypeptide is SsrA-binding protein (Escherichia coli O139:H28 (strain E24377A / ETEC)).